The following is a 312-amino-acid chain: Putative olfactory receptor 1F2 (312 aa).

Over 1 to 25 (MERDKPVSVSEFLLLGLSRQPQQQH) the chain is Extracellular. A helical transmembrane segment spans residues 26–49 (LLFVFFLSMYLATVLGNLLIILAI). Residues 50–57 (SIDSRLHT) are Cytoplasmic-facing. Residues 58–78 (PMYFFLSNMSFVDNCFSTTVP) form a helical membrane-spanning segment. The Extracellular segment spans residues 79 to 99 (KMLANHILRTQTISFSGCLMQ). Cysteine 96 and cysteine 188 are oxidised to a cystine. A helical membrane pass occupies residues 100–119 (MYFISELADMDNFLLAVMAY). Topologically, residues 120–138 (DRFVAVCRPLHYTAKMIHQ) are cytoplasmic. A helical transmembrane segment spans residues 139 to 157 (LCALLVTGSWVVANSNALL). The Extracellular segment spans residues 158–195 (HTLLMARLSFCADNTIPHIFCDVTPLLKLSCSDTHLSE). The helical transmembrane segment at 196 to 218 (VMILTEAALVTITPFLCLLASYM) threads the bilayer. Residues 219–235 (HITCVVLRVPSTKGRWK) are Cytoplasmic-facing. Residues 236-258 (AFSTCGSHLAVVLLFYGTIMSPY) traverse the membrane as a helical segment. Residues 259 to 271 (FRTSSSHSAQRDI) are Extracellular-facing. A helical membrane pass occupies residues 272-291 (AAAVRFTVVTPVMNPLIYSL). The Cytoplasmic segment spans residues 292 to 312 (RNKDIKGALVKVVAVKFFSVQ).

Belongs to the G-protein coupled receptor 1 family.

Its subcellular location is the cell membrane. Its function is as follows. Odorant receptor. The sequence is that of Putative olfactory receptor 1F2 (OR1F2P) from Homo sapiens (Human).